The primary structure comprises 416 residues: Imidazolonepropionase (416 aa).

The Fe(3+) site is built by histidine 78 and histidine 80. Residues histidine 78 and histidine 80 each coordinate Zn(2+). 4-imidazolone-5-propanoate is bound by residues arginine 87, tyrosine 150, and histidine 183. An N-formimidoyl-L-glutamate-binding site is contributed by tyrosine 150. Residue histidine 248 participates in Fe(3+) binding. Residue histidine 248 coordinates Zn(2+). Glutamine 251 provides a ligand contact to 4-imidazolone-5-propanoate. Aspartate 323 is a binding site for Fe(3+). Zn(2+) is bound at residue aspartate 323. Positions 325 and 327 each coordinate N-formimidoyl-L-glutamate. Threonine 328 is a binding site for 4-imidazolone-5-propanoate.

Belongs to the metallo-dependent hydrolases superfamily. HutI family. Requires Zn(2+) as cofactor. Fe(3+) is required as a cofactor.

It localises to the cytoplasm. The catalysed reaction is 4-imidazolone-5-propanoate + H2O = N-formimidoyl-L-glutamate. Its pathway is amino-acid degradation; L-histidine degradation into L-glutamate; N-formimidoyl-L-glutamate from L-histidine: step 3/3. In terms of biological role, catalyzes the hydrolytic cleavage of the carbon-nitrogen bond in imidazolone-5-propanoate to yield N-formimidoyl-L-glutamate. It is the third step in the universal histidine degradation pathway. The chain is Imidazolonepropionase from Vibrio parahaemolyticus serotype O3:K6 (strain RIMD 2210633).